A 221-amino-acid polypeptide reads, in one-letter code: H-2 class II histocompatibility antigen, A-Q alpha chain (221 aa).

The interval 1 to 76 is alpha-1; sequence GIVVYQSPGD…KRSNFTPATN (76 aa). The Extracellular portion of the chain corresponds to 1–183; the sequence is GIVVYQSPGD…IPAPMSELTE (183 aa). Residues 77 to 170 are alpha-2; the sequence is EAPQATVFPK…GLDEPVLKHW (94 aa). One can recognise an Ig-like C1-type domain in the interval 79-171; sequence PQATVFPKSP…LDEPVLKHWE (93 aa). Cys99 and Cys155 are joined by a disulfide. N-linked (GlcNAc...) asparagine glycosylation is present at Asn110. The segment at 171 to 183 is connecting peptide; the sequence is EPEIPAPMSELTE. The chain crosses the membrane as a helical span at residues 184–209; it reads TVVCALGLSVGLVGIVVGTIFIIQGL. Residues 210–221 are Cytoplasmic-facing; that stretch reads RSGGTSRPPGPL.

This sequence belongs to the MHC class II family.

Its subcellular location is the membrane. This is H-2 class II histocompatibility antigen, A-Q alpha chain (H2-Aa) from Mus musculus (Mouse).